A 247-amino-acid polypeptide reads, in one-letter code: Inhibitory synaptic factor 1 (247 aa).

The stretch at 30–65 (RAVIGQLEGILRDLKEVAKELKEVVEQIDRLTSDFE) forms a coiled coil. 3 disordered regions span residues 69 to 90 (DTDDWTPGTVSSTSSSEKGGPL), 112 to 166 (ASTP…RDRV), and 180 to 217 (DDSEDPPYGQETPRDPPRATAPCAVMKSKPGGLTGVRK). A compositionally biased stretch (polar residues) spans 76–85 (GTVSSTSSSE).

It belongs to the INSYN1 family.

It is found in the postsynaptic density. Functionally, may be a component of the protein machinery at the inhibitory synapses, probably acting as a scaffold. This is Inhibitory synaptic factor 1 from Xenopus laevis (African clawed frog).